We begin with the raw amino-acid sequence, 550 residues long: MEKKMFCYQCQETAGNKGCILKGVCGKDFSTANLMDLLVFNLKGIAIIMTSMRRAGVKADYRKADKAIMESLFATITNANFDYSSIAKRVEKTFALKAELYSLAFTQGIELPENEAVTMQGKPEEYDRLALSVGILRETDEDVRSLKELTIYGLKGLAAYAEHADRLGYVDEEINAFTERALHDVTMGLLSAEELTALVLETGSFGVKVMALLDKANTETYGNPEITEVNIGVGSRPGILISGHDLKDMEMLLEQTEGTGIDVYTHGEMLPANYYPKFKKYNHFFGNYGNAWWKQREEFETFNGPILFTTNCIVPPKANASYKDRVFTTNATGYPGFKYIESDQHGRKDFSEIIALAKTCQPPTEIESGTIIGGFAHHQVLSIADKVVEAVSSGAIRKFVVMSGCDGRQSGRNYYTEFAEALPSDTVILTSGCAKFRYNKLQLGDIGGIPRVLDAGQCNDSYSLAVIALKLKEVMGLDDINKLPIVYNIAWYEQKAVIVLLALLSLGVKNIHVGPTLPAFLSPNVAKVLIENFGIAGIGTVEEDIRTLIA.

[4Fe-4S] cluster contacts are provided by Cys7, Cys10, Cys19, and Cys25. Positions 244, 268, 312, 405, 433, 458, 493, and 495 each coordinate hybrid [4Fe-2O-2S] cluster. At Cys405 the chain carries Cysteine persulfide.

Belongs to the HCP family. The cofactor is [4Fe-4S] cluster. Hybrid [4Fe-2O-2S] cluster is required as a cofactor.

The protein resides in the cytoplasm. The catalysed reaction is A + NH4(+) + H2O = hydroxylamine + AH2 + H(+). In terms of biological role, catalyzes the reduction of hydroxylamine to form NH(3) and H(2)O. The sequence is that of Hydroxylamine reductase from Porphyromonas gingivalis (strain ATCC BAA-308 / W83).